Here is a 2212-residue protein sequence, read N- to C-terminus: Nonribosomal peptide synthetase ftmPS (2212 aa).

The adenylation 1 stretch occupies residues Thr74 to Pro473. A Carrier 1 domain is found at Pro592 to Gln669. An O-(pantetheine 4'-phosphoryl)serine modification is found at Ser629. The interval Glu708 to Val973 is condensation 1. An adenylation 2 region spans residues Thr1167–Arg1564. One can recognise a Carrier 2 domain in the interval Pro1678–Asp1757. Ser1715 bears the O-(pantetheine 4'-phosphoryl)serine mark. The segment at His1815–Ser2070 is condensation 2.

It belongs to the NRP synthetase family.

It catalyses the reaction L-proline + L-tryptophan + 2 ATP = brevianamide F + 2 AMP + 2 diphosphate + 2 H(+). Its pathway is mycotoxin biosynthesis. Its function is as follows. Nonribosomal peptide synthetase; part of the gene cluster that mediates the biosynthesis of fumitremorgins, indole alkaloids that carry not only intriguing chemical structures, but also interesting biological and pharmacological activities. The biosynthesis of fumitremorgin-type alkaloids begins by condensation of the two amino acids L-tryptophan and L-proline to brevianamide F, catalyzed by the non-ribosomal peptide synthetase ftmPS/ftmA. Brevianamide F is then prenylated by the prenyltransferase ftmPT1/ftmB in the presence of dimethylallyl diphosphate, resulting in the formation of tryprostatin B. The three cytochrome P450 monooxygenases, ftmP450-1/ftmC, ftmP450-2/ftmE and ftmP450-3/FtmG, are responsible for the conversion of tryprostatin B to 6-hydroxytryprostatin B, tryprostatin A to fumitremorgin C and fumitremorgin C to 12,13-dihydroxyfumitremorgin C, respectively. The putative methyltransferase ftmMT/ftmD is expected for the conversion of 6-hydroxytryprostatin B to tryprostatin A. FtmPT2/FtmH catalyzes the prenylation of 12,13-dihydroxyfumitre-morgin C in the presence of dimethylallyl diphosphate, resulting in the formation of fumitremorgin B. Fumitremorgin B is further converted to verruculogen by ftmOx1/ftmF via the insertion of an endoperoxide bond between the two prenyl moieties. Finally, verruculogen is further converted to fumitremorgin A by the verruculogen prenyltransferase ftmPT3. This chain is Nonribosomal peptide synthetase ftmPS (ftmPS), found in Neosartorya fischeri (strain ATCC 1020 / DSM 3700 / CBS 544.65 / FGSC A1164 / JCM 1740 / NRRL 181 / WB 181) (Aspergillus fischerianus).